Here is a 707-residue protein sequence, read N- to C-terminus: Serine/threonine protein kinase UL97 (707 aa).

Low complexity predominate over residues 1 to 14 (MSSALRSRARSASL). 4 disordered regions span residues 1–32 (MSSALRSRARSASLGTTTEGWDPPPLRRPSRA), 115–146 (EKEDAASDKENLRRPVVPSTSSRGSAASGDGY), 176–199 (FTGGSDPSDSVSGVRGGRKRPLRP), and 231–264 (ESQDSAVASGPGRVPQPLSGSSGEESATAVEADS). A compositionally biased stretch (basic and acidic residues) spans 115 to 127 (EKEDAASDKENLR). Positions 178–188 (GGSDPSDSVSG) are enriched in low complexity. ATP-binding positions include 337–345 (LGQGSFGEV) and K359. Catalysis depends on D456, which acts as the Proton acceptor.

The protein belongs to the protein kinase superfamily. Tyr protein kinase family. HCMV ganciclovir subfamily. Interacts with UL83. Post-translationally, autophosphorylates on serine and threonine residues.

It localises to the virion. The catalysed reaction is L-seryl-[protein] + ATP = O-phospho-L-seryl-[protein] + ADP + H(+). It carries out the reaction L-threonyl-[protein] + ATP = O-phospho-L-threonyl-[protein] + ADP + H(+). In terms of biological role, serine/threonine protein kinase that plays important roles in several processes including nuclear viral egress, viral replication or regulation of host cell cycle progression. Participates in the acquisition of tegument during virion morphogenesis in the nucleus. Redistributes the host nuclear lamina by phosphorylating cellular Lamins-A/C. Plays a role in viral DNA synthesis by phosphorylating the DNA polymerase processivity factor UL44. Stimulates host cell cycle to support viral DNA synthesis by phosphorylating host retinoblastoma/RB1 protein. Additional substrates have been identified including host EF1D or H2B. Also phosphorylates host SAMHD1 and thereby counteracts its antiviral effect by reducing its dNTP hydrolase activity. This is Serine/threonine protein kinase UL97 (UL97) from Human cytomegalovirus (strain Towne) (HHV-5).